A 283-amino-acid polypeptide reads, in one-letter code: Thymidylate synthase (283 aa).

Arg22 provides a ligand contact to dUMP. Cys160 functions as the Nucleophile in the catalytic mechanism. Residues 180-183, Asn191, and 221-223 contribute to the dUMP site; these read RSCD and HIY. Position 183 (Asp183) interacts with (6R)-5,10-methylene-5,6,7,8-tetrahydrofolate. Ser282 contributes to the (6R)-5,10-methylene-5,6,7,8-tetrahydrofolate binding site.

Belongs to the thymidylate synthase family. Bacterial-type ThyA subfamily. Homodimer.

The protein localises to the cytoplasm. The enzyme catalyses dUMP + (6R)-5,10-methylene-5,6,7,8-tetrahydrofolate = 7,8-dihydrofolate + dTMP. It participates in pyrimidine metabolism; dTTP biosynthesis. Its function is as follows. Catalyzes the reductive methylation of 2'-deoxyuridine-5'-monophosphate (dUMP) to 2'-deoxythymidine-5'-monophosphate (dTMP) while utilizing 5,10-methylenetetrahydrofolate (mTHF) as the methyl donor and reductant in the reaction, yielding dihydrofolate (DHF) as a by-product. This enzymatic reaction provides an intracellular de novo source of dTMP, an essential precursor for DNA biosynthesis. In Haemophilus influenzae (strain PittEE), this protein is Thymidylate synthase.